The chain runs to 426 residues: Glutamyl-tRNA reductase (426 aa).

Residues 49 to 52 (TCNR), Ser-109, 114 to 116 (EGQ), and Gln-120 each bind substrate. Cys-50 functions as the Nucleophile in the catalytic mechanism. Residue 189-194 (GAGETG) participates in NADP(+) binding.

It belongs to the glutamyl-tRNA reductase family. Homodimer.

It carries out the reaction (S)-4-amino-5-oxopentanoate + tRNA(Glu) + NADP(+) = L-glutamyl-tRNA(Glu) + NADPH + H(+). Its pathway is porphyrin-containing compound metabolism; protoporphyrin-IX biosynthesis; 5-aminolevulinate from L-glutamyl-tRNA(Glu): step 1/2. It participates in porphyrin-containing compound metabolism; chlorophyll biosynthesis. Catalyzes the NADPH-dependent reduction of glutamyl-tRNA(Glu) to glutamate 1-semialdehyde (GSA). This Chlorobium phaeobacteroides (strain BS1) protein is Glutamyl-tRNA reductase.